The primary structure comprises 317 residues: Cyclin-T1-3 (317 aa).

Belongs to the cyclin family. Cyclin T subfamily. In terms of assembly, interacts with CDKC-1 and CDKC-2. Abundantly expressed in flowers. Expressed in roots, seedlings, rosettes and stems.

The sequence is that of Cyclin-T1-3 (CYCT1-3) from Arabidopsis thaliana (Mouse-ear cress).